Consider the following 313-residue polypeptide: MRRAALWLWLCALALRLQPALPQIVTANVPPEDQDGSGDDSDNFSGSGTGALPDMTLSRQTPSTWKDVWLLTATPTAPEPTSRDTEATLTSILPAGEKPEEGEPVAHVEAEPDFTARDKEKEATTRPRETTQLPVTQQASTAARATTAQASVTSHPHGDVQPGLHETLAPTAPGQPDHQPPSVEDGGTSVIKEVVEDETTNQLPAGEGSGEQDFTFETSGENTAVAGVEPDLRNQSPVDEGATGASQGLLDRKEVLGGVIAGGLVGLIFAVCLVAFMLYRMKKKDEGSYSLEEPKQANGGAYQKPTKQEEFYA.

A signal peptide spans 1-22 (MRRAALWLWLCALALRLQPALP). The Extracellular segment spans residues 23-257 (QIVTANVPPE…GLLDRKEVLG (235 aa)). 2 disordered regions span residues 27–58 (ANVP…MTLS) and 95–186 (AGEK…VEDG). Positions 32 to 42 (EDQDGSGDDSD) are enriched in acidic residues. A glycan (O-linked (Xyl...) (chondroitin sulfate) serine) is linked at Ser-37. Asn-43 is a glycosylation site (N-linked (GlcNAc...) asparagine). Residues Ser-45 and Ser-47 are each glycosylated (O-linked (Xyl...) (heparan sulfate) serine). Residues 97–129 (EKPEEGEPVAHVEAEPDFTARDKEKEATTRPRE) show a composition bias toward basic and acidic residues. Positions 135 to 154 (VTQQASTAARATTAQASVTS) are enriched in low complexity. 2 O-linked (Xyl...) (chondroitin sulfate) serine glycosylation sites follow: Ser-209 and Ser-219. Residues 258–278 (GVIAGGLVGLIFAVCLVAFML) form a helical membrane-spanning segment. Over 279–313 (YRMKKKDEGSYSLEEPKQANGGAYQKPTKQEEFYA) the chain is Cytoplasmic. Residues 286-295 (EGSYSLEEPK) are compositionally biased toward basic and acidic residues. The interval 286 to 313 (EGSYSLEEPKQANGGAYQKPTKQEEFYA) is disordered. Ser-288 is modified (phosphoserine).

This sequence belongs to the syndecan proteoglycan family. In terms of assembly, interacts with CDCP1. Interacts (via C-terminus) with TIAM1 (via PDZ domain). Interacts with MDK. In terms of processing, shedding is enhanced by a number of factors such as heparanase, thrombin or EGF. Also by stress and wound healing. PMA-mediated shedding is inhibited by TIMP3.

It localises to the membrane. The protein localises to the secreted. It is found in the extracellular exosome. Its function is as follows. Cell surface proteoglycan that contains both heparan sulfate and chondroitin sulfate and that links the cytoskeleton to the interstitial matrix. Regulates exosome biogenesis in concert with SDCBP and PDCD6IP. Able to induce its own expression in dental mesenchymal cells and also in the neighboring dental epithelial cells via an MSX1-mediated pathway. In Rattus norvegicus (Rat), this protein is Syndecan-1.